Here is a 418-residue protein sequence, read N- to C-terminus: Glutamyl-tRNA reductase (418 aa).

Residues Thr49–Arg52, Ser109, Glu114–Gln116, and Gln120 each bind substrate. Residue Cys50 is the Nucleophile of the active site. Gly189–Ile194 provides a ligand contact to NADP(+).

This sequence belongs to the glutamyl-tRNA reductase family. As to quaternary structure, homodimer.

The catalysed reaction is (S)-4-amino-5-oxopentanoate + tRNA(Glu) + NADP(+) = L-glutamyl-tRNA(Glu) + NADPH + H(+). It participates in porphyrin-containing compound metabolism; protoporphyrin-IX biosynthesis; 5-aminolevulinate from L-glutamyl-tRNA(Glu): step 1/2. Catalyzes the NADPH-dependent reduction of glutamyl-tRNA(Glu) to glutamate 1-semialdehyde (GSA). This is Glutamyl-tRNA reductase from Salmonella choleraesuis (strain SC-B67).